The sequence spans 510 residues: Bifunctional pantoate ligase/cytidylate kinase (510 aa).

Residues methionine 1 to valine 276 form a pantoate--beta-alanine ligase region. Methionine 29–histidine 36 is a binding site for ATP. The Proton donor role is filled by histidine 36. Glutamine 61 contributes to the (R)-pantoate binding site. Glutamine 61 provides a ligand contact to beta-alanine. Residue glycine 150–aspartate 153 coordinates ATP. Residue glutamine 156 participates in (R)-pantoate binding. Leucine 187–arginine 190 contributes to the ATP binding site. The interval phenylalanine 277–lysine 510 is cytidylate kinase.

It in the N-terminal section; belongs to the pantothenate synthetase family. The protein in the C-terminal section; belongs to the cytidylate kinase family. Type 1 subfamily.

It localises to the cytoplasm. It carries out the reaction (R)-pantoate + beta-alanine + ATP = (R)-pantothenate + AMP + diphosphate + H(+). The enzyme catalyses CMP + ATP = CDP + ADP. It catalyses the reaction dCMP + ATP = dCDP + ADP. The protein operates within cofactor biosynthesis; (R)-pantothenate biosynthesis; (R)-pantothenate from (R)-pantoate and beta-alanine: step 1/1. Its function is as follows. Catalyzes the condensation of pantoate with beta-alanine in an ATP-dependent reaction via a pantoyl-adenylate intermediate. Catalyzes the transfer of a phosphate group from ATP to either CMP or dCMP to form CDP or dCDP and ADP, respectively. This Prochlorococcus marinus (strain MIT 9301) protein is Bifunctional pantoate ligase/cytidylate kinase.